The sequence spans 120 residues: Large ribosomal subunit protein bL19 (120 aa).

Belongs to the bacterial ribosomal protein bL19 family.

Its function is as follows. This protein is located at the 30S-50S ribosomal subunit interface and may play a role in the structure and function of the aminoacyl-tRNA binding site. The chain is Large ribosomal subunit protein bL19 from Rippkaea orientalis (strain PCC 8801 / RF-1) (Cyanothece sp. (strain PCC 8801)).